A 381-amino-acid polypeptide reads, in one-letter code: MNAPQKHSAPITVEVALGDRAYEIVIGRDVIASLGERIAKLRPGARTAIVTDRTVAKTWLKRTEEVLDQAGIAHASVIVGEGESSKSYAGLEQVCEALIAAKIERNDLVIALGGGVIGDLAGFSASLLRRGVDFVQVPTSLLAQVDSSVGGKTGINSPQGKNLIGTFHQPVLVLADTAILDTLSPRQFRAGYAEVAKYGALGDEAFFAWLEANHAELFSGGAAREHAVATSCRAKAAIVARDERETGDRALLNLGHTFGHALEAATGFSDRLFHGEGVAIGMVLAAEFSAERGMMPATDAERLAKHLAEVGLPTRLQDIAGFTQEGLADADRLMALMAQDKKVKRGELTFILMEGIGRAVIASKVEPAPVRDFLQRKLAQA.

Residues 81 to 86, 115 to 119, 139 to 140, lysine 152, and lysine 161 contribute to the NAD(+) site; these read EGESSK, GVIGD, and TS. Residues glutamate 194, histidine 256, and histidine 274 each contribute to the Zn(2+) site.

The protein belongs to the sugar phosphate cyclases superfamily. Dehydroquinate synthase family. The cofactor is Co(2+). It depends on Zn(2+) as a cofactor. NAD(+) is required as a cofactor.

It is found in the cytoplasm. It carries out the reaction 7-phospho-2-dehydro-3-deoxy-D-arabino-heptonate = 3-dehydroquinate + phosphate. It participates in metabolic intermediate biosynthesis; chorismate biosynthesis; chorismate from D-erythrose 4-phosphate and phosphoenolpyruvate: step 2/7. Catalyzes the conversion of 3-deoxy-D-arabino-heptulosonate 7-phosphate (DAHP) to dehydroquinate (DHQ). The protein is 3-dehydroquinate synthase of Rhodopseudomonas palustris (strain ATCC BAA-98 / CGA009).